Here is a 360-residue protein sequence, read N- to C-terminus: MSLLKGRNYYKPFTYPEFYNKWDKHEKSHWLPSEVPMHDDVNDWKNRLNDNQRDFLTNIFRFFTQGDVDVASAYYTQYLPFFKLPEVTMMMGGFAGREGVHIDAYSYLLETLGMPEATYKEFLMYEEMKDKQDYIKKFSDSRHILGKGEENLTTEDKEHIAAGIALFSGFTEGMQLFSTFAMLLIFPLNGFMKGMGQIVTWSIVDETQHTEGMIELFKVFVEENKTGDQPIRPSVLQETVYKIAKEMVGLEEAFIDLVFKKYKDEPINDDNDLETKDNKDFFGLTPQRLKAYIKYIADRRLNLMGYKSIFNLEPYPTNPLPELEIMINAPTHTNFFENRSTDYANVSTKGTWSEIWNKPQ.

Positions 67, 98, and 101 each coordinate Fe cation. Residue Tyr105 is part of the active site. 3 residues coordinate Fe cation: Glu172, Glu206, and His209.

This sequence belongs to the ribonucleoside diphosphate reductase small chain family. As to quaternary structure, heterotetramer composed of a homodimer of the large subunit (R1) and a homodimer of the small subunit (R2). Larger multisubunit protein complex are also active, composed of (R1)n(R2)n. Fe cation serves as cofactor.

It carries out the reaction a 2'-deoxyribonucleoside 5'-diphosphate + [thioredoxin]-disulfide + H2O = a ribonucleoside 5'-diphosphate + [thioredoxin]-dithiol. Ribonucleoside-diphosphate reductase holoenzyme provides the precursors necessary for viral DNA synthesis. Allows virus growth in non-dividing cells. Catalyzes the biosynthesis of deoxyribonucleotides from the corresponding ribonucleotides. In Acheta domesticus (House cricket), this protein is Probable ribonucleoside-diphosphate reductase small subunit 376L.